The sequence spans 152 residues: Small ribosomal subunit protein bS6 (152 aa).

This sequence belongs to the bacterial ribosomal protein bS6 family.

Its function is as follows. Binds together with bS18 to 16S ribosomal RNA. The chain is Small ribosomal subunit protein bS6 from Bdellovibrio bacteriovorus (strain ATCC 15356 / DSM 50701 / NCIMB 9529 / HD100).